An 879-amino-acid chain; its full sequence is DNA mismatch repair protein MutS (879 aa).

Residue 629-636 participates in ATP binding; sequence GPNMGGKS.

Belongs to the DNA mismatch repair MutS family.

In terms of biological role, this protein is involved in the repair of mismatches in DNA. It is possible that it carries out the mismatch recognition step. This protein has a weak ATPase activity. In Erythrobacter litoralis (strain HTCC2594), this protein is DNA mismatch repair protein MutS.